Consider the following 689-residue polypeptide: Beta-adrenergic receptor kinase 1 (689 aa).

Positions 1 to 190 are N-terminal; it reads MADLEAVLAD…ELNIHLTMND (190 aa). Residues 54-175 enclose the RGS domain; that stretch reads TFEKIFSQKL…IESEKFTRFC (122 aa). Residues 191-453 form the Protein kinase domain; that stretch reads FSVHRIIGRG…AQEVKEDPFF (263 aa). Residues 197-205 and Lys-220 each bind ATP; that span reads IGRGGFGEV. The Proton acceptor role is filled by Asp-317. The AGC-kinase C-terminal domain maps to 454-521; sequence KAVDWQMVLL…TISERWQQEV (68 aa). In terms of domain architecture, PH spans 558 to 652; it reads DCIMHGYMSK…WKKELRDVYR (95 aa). Residues 665 to 689 are disordered; sequence KNKPRSPVVELSKMPLTQRGSANGL. Position 670 is a phosphoserine (Ser-670).

Belongs to the protein kinase superfamily. AGC Ser/Thr protein kinase family. GPRK subfamily. In terms of assembly, interacts with the heterodimer formed by GNB1 and GNG2. Interacts with GIT1. Interacts with, and phosphorylates chemokine-stimulated CCR5. Interacts with ARRB1. Interacts with LPAR1 and LPAR2. Interacts with RALA in response to LPAR1 activation. ADRBK1 and RALA mutually inhibit each other's binding to LPAR1. Interacts with ADRB2.

It localises to the cytoplasm. It is found in the cell membrane. Its subcellular location is the postsynapse. The protein localises to the presynapse. The catalysed reaction is [beta-adrenergic receptor] + ATP = [beta-adrenergic receptor]-phosphate + ADP + H(+). With respect to regulation, in contrast to other AGC family kinases, the catalytic activity is solely regulated by the binding of substrates and ligands, not by phosphorylation of the kinase domain. Specifically phosphorylates the agonist-occupied form of the beta-adrenergic and closely related receptors, probably inducing a desensitization of them. Does not act on HTR1B/5-hydroxytryptamine 1B receptor. Key regulator of LPAR1 signaling. Competes with RALA for binding to LPAR1 thus affecting the signaling properties of the receptor. Desensitizes LPAR1 and LPAR2 in a phosphorylation-independent manner. Inhibits relaxation of airway smooth muscle in response to blue light. The chain is Beta-adrenergic receptor kinase 1 from Didelphis virginiana (North American opossum).